Consider the following 562-residue polypeptide: Extracellular matrix protein 1 (562 aa).

Residues 1 to 19 (MGTIRSSALILACLALASA) form the signal peptide. 2 disordered regions span residues 46-87 (GYAA…SSPE) and 119-171 (QKEQ…WNPA). Basic and acidic residues predominate over residues 129 to 154 (IEQKEIDPPVQHQEEIVQSRQKEEKP). 2 tandem repeats follow at residues 172-301 (RHCQ…RPDY) and 305-427 (PCPI…YPNY). The tract at residues 172–427 (RHCQQGRRGI…FAHLAPYPNY (256 aa)) is 2 X approximate repeats. N-linked (GlcNAc...) asparagine glycans are attached at residues asparagine 376, asparagine 466, and asparagine 538. A disordered region spans residues 539-562 (ATGLGQQGPTGGTNVGPAPGSKEE). Positions 543 to 552 (GQQGPTGGTN) are enriched in gly residues. Serine 559 is modified (phosphoserine).

As to quaternary structure, interacts (via C-terminus) with HSPG2 (via C-terminus). Interacts with EFEMP1/FBLN3 and LAMB3. Interacts with MMP9.

Its subcellular location is the secreted. The protein resides in the extracellular space. The protein localises to the extracellular matrix. Its function is as follows. Involved in endochondral bone formation as negative regulator of bone mineralization. Stimulates the proliferation of endothelial cells and promotes angiogenesis. Inhibits MMP9 proteolytic activity. This Rattus norvegicus (Rat) protein is Extracellular matrix protein 1 (Ecm1).